The chain runs to 260 residues: Hydroxyethylthiazole kinase 1 (260 aa).

Methionine 39 is a substrate binding site. ATP-binding residues include arginine 115 and threonine 160. Glycine 187 is a binding site for substrate.

This sequence belongs to the Thz kinase family. Mg(2+) is required as a cofactor.

The enzyme catalyses 5-(2-hydroxyethyl)-4-methylthiazole + ATP = 4-methyl-5-(2-phosphooxyethyl)-thiazole + ADP + H(+). The protein operates within cofactor biosynthesis; thiamine diphosphate biosynthesis; 4-methyl-5-(2-phosphoethyl)-thiazole from 5-(2-hydroxyethyl)-4-methylthiazole: step 1/1. Functionally, catalyzes the phosphorylation of the hydroxyl group of 4-methyl-5-beta-hydroxyethylthiazole (THZ). This Streptococcus pneumoniae (strain ATCC 700669 / Spain 23F-1) protein is Hydroxyethylthiazole kinase 1.